The chain runs to 201 residues: Small ribosomal subunit protein uS5 (201 aa).

Residues 1-28 (MAGPQRRGSGAGGGERRDRKGRDGGASA) are disordered. Basic and acidic residues predominate over residues 14 to 23 (GERRDRKGRD). The S5 DRBM domain occupies 34–97 (YVERVVAINR…EEAKKNFFKV (64 aa)).

Belongs to the universal ribosomal protein uS5 family. In terms of assembly, part of the 30S ribosomal subunit. Contacts proteins S4 and S8.

In terms of biological role, with S4 and S12 plays an important role in translational accuracy. Located at the back of the 30S subunit body where it stabilizes the conformation of the head with respect to the body. This Streptomyces griseus subsp. griseus (strain JCM 4626 / CBS 651.72 / NBRC 13350 / KCC S-0626 / ISP 5235) protein is Small ribosomal subunit protein uS5.